The sequence spans 361 residues: Phospho-N-acetylmuramoyl-pentapeptide-transferase (361 aa).

10 consecutive transmembrane segments (helical) span residues 25-45 (RAVL…PWVI), 73-93 (TMGG…WADL), 97-117 (YVWL…YDDW), 134-154 (MFWQ…TASL), 168-188 (VIYP…IVGT), 200-220 (GLAA…AYVA), 240-260 (VAVF…FNAY), 264-284 (VFMG…VAVI), 289-309 (IVLF…MIQV), and 338-358 (QVVV…LSTL).

The protein belongs to the glycosyltransferase 4 family. MraY subfamily. Requires Mg(2+) as cofactor.

The protein resides in the cell inner membrane. The catalysed reaction is UDP-N-acetyl-alpha-D-muramoyl-L-alanyl-gamma-D-glutamyl-meso-2,6-diaminopimeloyl-D-alanyl-D-alanine + di-trans,octa-cis-undecaprenyl phosphate = di-trans,octa-cis-undecaprenyl diphospho-N-acetyl-alpha-D-muramoyl-L-alanyl-D-glutamyl-meso-2,6-diaminopimeloyl-D-alanyl-D-alanine + UMP. It functions in the pathway cell wall biogenesis; peptidoglycan biosynthesis. Its function is as follows. Catalyzes the initial step of the lipid cycle reactions in the biosynthesis of the cell wall peptidoglycan: transfers peptidoglycan precursor phospho-MurNAc-pentapeptide from UDP-MurNAc-pentapeptide onto the lipid carrier undecaprenyl phosphate, yielding undecaprenyl-pyrophosphoryl-MurNAc-pentapeptide, known as lipid I. This Laribacter hongkongensis (strain HLHK9) protein is Phospho-N-acetylmuramoyl-pentapeptide-transferase.